The primary structure comprises 97 residues: Large ribosomal subunit protein uL23 (97 aa).

It belongs to the universal ribosomal protein uL23 family. As to quaternary structure, part of the 50S ribosomal subunit. Contacts protein L29, and trigger factor when it is bound to the ribosome.

In terms of biological role, one of the early assembly proteins it binds 23S rRNA. One of the proteins that surrounds the polypeptide exit tunnel on the outside of the ribosome. Forms the main docking site for trigger factor binding to the ribosome. The chain is Large ribosomal subunit protein uL23 from Bartonella henselae (strain ATCC 49882 / DSM 28221 / CCUG 30454 / Houston 1) (Rochalimaea henselae).